The following is a 252-amino-acid chain: Imidazole glycerol phosphate synthase subunit HisF (252 aa).

Active-site residues include Asp11 and Asp130.

This sequence belongs to the HisA/HisF family. Heterodimer of HisH and HisF.

It localises to the cytoplasm. It carries out the reaction 5-[(5-phospho-1-deoxy-D-ribulos-1-ylimino)methylamino]-1-(5-phospho-beta-D-ribosyl)imidazole-4-carboxamide + L-glutamine = D-erythro-1-(imidazol-4-yl)glycerol 3-phosphate + 5-amino-1-(5-phospho-beta-D-ribosyl)imidazole-4-carboxamide + L-glutamate + H(+). It participates in amino-acid biosynthesis; L-histidine biosynthesis; L-histidine from 5-phospho-alpha-D-ribose 1-diphosphate: step 5/9. Its function is as follows. IGPS catalyzes the conversion of PRFAR and glutamine to IGP, AICAR and glutamate. The HisF subunit catalyzes the cyclization activity that produces IGP and AICAR from PRFAR using the ammonia provided by the HisH subunit. This chain is Imidazole glycerol phosphate synthase subunit HisF, found in Citrifermentans bemidjiense (strain ATCC BAA-1014 / DSM 16622 / JCM 12645 / Bem) (Geobacter bemidjiensis).